We begin with the raw amino-acid sequence, 207 residues long: uncharacterized protein (207 aa).

The next 5 helical transmembrane spans lie at 28 to 48 (IAVLLPLIEAFLPFLPLIVFV), 59 to 79 (EGFILSWAGSTAGSILVFLIV), 112 to 132 (MFLLLCFPFTPSAAVNVVAGL), 140 to 160 (FILAAASGKLVMIFMISFIGY), and 165 to 185 (LITQPIRTVIAVLVITVLWYV).

The protein localises to the cell membrane. This is an uncharacterized protein from Bacillus subtilis (strain 168).